We begin with the raw amino-acid sequence, 60 residues long: Large ribosomal subunit protein uL30 (60 aa).

This sequence belongs to the universal ribosomal protein uL30 family. In terms of assembly, part of the 50S ribosomal subunit.

The protein is Large ribosomal subunit protein uL30 of Lactiplantibacillus plantarum (strain ATCC BAA-793 / NCIMB 8826 / WCFS1) (Lactobacillus plantarum).